A 140-amino-acid polypeptide reads, in one-letter code: Small ribosomal subunit protein uS12m (140 aa).

Belongs to the universal ribosomal protein uS12 family.

The protein resides in the mitochondrion. The polypeptide is Small ribosomal subunit protein uS12m (mrps12) (Dictyostelium discoideum (Social amoeba)).